Reading from the N-terminus, the 714-residue chain is DNA ligase (714 aa).

NAD(+) is bound by residues 40–44 (DADYD), 90–91 (SL), and Glu-124. The active-site N6-AMP-lysine intermediate is Lys-126. NAD(+) is bound by residues Arg-147, Glu-183, Lys-304, and Lys-328. Residues Cys-420, Cys-423, Cys-438, and Cys-444 each contribute to the Zn(2+) site. The BRCT domain occupies 634-714 (TRDSEVSGKT…EWAAIVAAAG (81 aa)).

The protein belongs to the NAD-dependent DNA ligase family. LigA subfamily. It depends on Mg(2+) as a cofactor. The cofactor is Mn(2+).

It carries out the reaction NAD(+) + (deoxyribonucleotide)n-3'-hydroxyl + 5'-phospho-(deoxyribonucleotide)m = (deoxyribonucleotide)n+m + AMP + beta-nicotinamide D-nucleotide.. Functionally, DNA ligase that catalyzes the formation of phosphodiester linkages between 5'-phosphoryl and 3'-hydroxyl groups in double-stranded DNA using NAD as a coenzyme and as the energy source for the reaction. It is essential for DNA replication and repair of damaged DNA. This is DNA ligase from Sphingopyxis alaskensis (strain DSM 13593 / LMG 18877 / RB2256) (Sphingomonas alaskensis).